Reading from the N-terminus, the 347-residue chain is Isopentenyl-diphosphate delta-isomerase (347 aa).

A disordered region spans residues 1–31; the sequence is MDESNSQFEKRKRDHIRIALDPRSQTDGQNG. The span at 8 to 20 shows a compositional bias: basic and acidic residues; the sequence is FEKRKRDHIRIAL. Substrate is bound at residue 11–12; that stretch reads RK. FMN contacts are provided by residues Ser-72, 73–75, Ser-103, and Asn-132; that span reads SMT. Position 103–105 (103–105) interacts with substrate; the sequence is SQR. Gln-166 provides a ligand contact to substrate. Glu-167 contributes to the Mg(2+) binding site. Residues Lys-198, Ser-223, Thr-228, 279–281, and 300–301 contribute to the FMN site; these read GVR and AK.

The protein belongs to the IPP isomerase type 2 family. As to quaternary structure, homooctamer. Dimer of tetramers. It depends on FMN as a cofactor. NADPH is required as a cofactor. The cofactor is Mg(2+).

It is found in the cytoplasm. It carries out the reaction isopentenyl diphosphate = dimethylallyl diphosphate. In terms of biological role, involved in the biosynthesis of isoprenoids. Catalyzes the 1,3-allylic rearrangement of the homoallylic substrate isopentenyl (IPP) to its allylic isomer, dimethylallyl diphosphate (DMAPP). The protein is Isopentenyl-diphosphate delta-isomerase of Bdellovibrio bacteriovorus (strain ATCC 15356 / DSM 50701 / NCIMB 9529 / HD100).